Reading from the N-terminus, the 277-residue chain is uncharacterized protein (277 aa).

The signal sequence occupies residues 1–25 (MNKKSIWSKTAFGSLFLLLGTAFTA). Cysteine 26 is lipidated: N-palmitoyl cysteine. A lipid anchor (S-diacylglycerol cysteine) is attached at cysteine 26.

It belongs to the MG439/MG440 family.

The protein resides in the cell membrane. This is an uncharacterized protein from Mycoplasma pneumoniae (strain ATCC 29342 / M129 / Subtype 1) (Mycoplasmoides pneumoniae).